Consider the following 269-residue polypeptide: Protein tsct-1 (269 aa).

The protein belongs to the TSC-22/Dip/Bun family.

This Caenorhabditis elegans protein is Protein tsct-1.